A 327-amino-acid polypeptide reads, in one-letter code: NF-kappa-B inhibitor delta (327 aa).

Residues 1–40 form a disordered region; that stretch reads MEDSLDTRLYPEPSLSQVGSWRVSSLPSGSPQLPSPTGPS. The segment covering 14 to 23 has biased composition (polar residues); it reads SLSQVGSWRV. ANK repeat units lie at residues 62-97, 98-127, 131-160, 166-215, 220-250, and 257-290; these read EGDTLLHLFAARGLRWAAYAAAEVLQMYRQLDIREH, KGKTPLLVAAAANQPLIVEDLLSLGAEPNA, QGRSVLHVAATYGLPGVLSAVFKSGIQVDL, EGLT…SHTS, SNKTILHLAVQAANPTLVQLLLGLPRGDLRA, and HGNTALHMAAALPPGPPQEAIVRHLLAAGADPTL. The tract at residues 293-327 is disordered; that stretch reads LENEQPVHLLRPGPGPEGLRQLLKRSRTAPPGLSS.

It belongs to the NF-kappa-B inhibitor family. Interacts with NFKB1, RELA and RELB; in the nucleus. Specifically expressed in spleen and at low levels in thymus. Expressed in a population of antigen-presenting dendritic cells which may act as regulators of systemic inflammatory response.

It is found in the nucleus. Regulates the expression of IL-2, IL-6, and other cytokines through regulation on NF-kappa-B activity. Functions in the regulation of inflammatory responses. Involved in the induction of T helper 17 cells (Th17) differentiation upon recognition of antigen by T cell antigen receptor (TCR). According to PubMed:11931770, it may also regulate TCR-induced negative selection of thymocytes. This chain is NF-kappa-B inhibitor delta (Nfkbid), found in Mus musculus (Mouse).